Reading from the N-terminus, the 889-residue chain is Valine--tRNA ligase (889 aa).

The short motif at 50-60 (PNVTGKLHLGH) is the 'HIGH' region element. Residues 532–536 (KMSKS) carry the 'KMSKS' region motif. Residue K535 participates in ATP binding. The stretch at 816 to 889 (LAELVDLDEE…QRLVDIKAEA (74 aa)) forms a coiled coil.

It belongs to the class-I aminoacyl-tRNA synthetase family. ValS type 1 subfamily. In terms of assembly, monomer.

It localises to the cytoplasm. It carries out the reaction tRNA(Val) + L-valine + ATP = L-valyl-tRNA(Val) + AMP + diphosphate. Catalyzes the attachment of valine to tRNA(Val). As ValRS can inadvertently accommodate and process structurally similar amino acids such as threonine, to avoid such errors, it has a 'posttransfer' editing activity that hydrolyzes mischarged Thr-tRNA(Val) in a tRNA-dependent manner. In Lactiplantibacillus plantarum (strain ATCC BAA-793 / NCIMB 8826 / WCFS1) (Lactobacillus plantarum), this protein is Valine--tRNA ligase.